The chain runs to 289 residues: Protease HtpX (289 aa).

Helical transmembrane passes span 5 to 25 (IVLFAITNIAVLILASIVMSL) and 33 to 53 (MSGLLVMALILGFGGSLISLL). Histidine 140 contacts Zn(2+). Glutamate 141 is an active-site residue. Histidine 144 provides a ligand contact to Zn(2+). 2 helical membrane-spanning segments follow: residues 155–175 (LLQGVLNTFVIVLARVVGGFI) and 193–213 (GIVLVLELLFGLFATIITMWF). Glutamate 218 serves as a coordination point for Zn(2+).

The protein belongs to the peptidase M48B family. Zn(2+) is required as a cofactor.

It is found in the cell inner membrane. The sequence is that of Protease HtpX from Xylella fastidiosa (strain M23).